The following is a 245-amino-acid chain: Probable transcriptional regulatory protein Ddes_0536 (245 aa).

Residues 1–21 (MAGHSKWANIQHRKGRQDAKR) form a disordered region.

This sequence belongs to the TACO1 family.

Its subcellular location is the cytoplasm. The sequence is that of Probable transcriptional regulatory protein Ddes_0536 from Desulfovibrio desulfuricans (strain ATCC 27774 / DSM 6949 / MB).